A 1679-amino-acid chain; its full sequence is GRIP and coiled-coil domain-containing protein 2 (1679 aa).

Met-1 is modified (N-acetylmethionine). 2 disordered regions span residues 1–23 (MEDSAQDAVTAAPSGTPKSKLET) and 1466–1522 (LKSE…SAGT). The stretch at 35–1469 (KQMMLLQKAK…ETQLFQLKSE (1435 aa)) forms a coiled coil. Phosphoserine is present on residues Ser-1474 and Ser-1478. Over residues 1474–1483 (SPASSHQPSK) the composition is skewed to polar residues. The segment at 1569–1608 (HLNGLLRETEATNAILMEQIKLLKSEIRRLERNQEREKSV) is mediates interaction with RAB6A. A mediates interaction with RAB9A region spans residues 1569–1679 (HLNGLLRETE…SYLHSWSGLR (111 aa)). The GRIP domain maps to 1604–1654 (REKSVANLEYLKNVLLRFIFLKPGSERERLLPVIDTMLQLSPEEKGKLATV).

As to quaternary structure, homodimer. Interacts (via GRIP domain) with RAB6A (preferentially in its GTP-bound form). May interact (RAB6A-dependent) with ARL1; might be involved in GCC2 Golgi localization. Interacts with CLASP1 and CLASP2; recruits both proteins to membranes of the TGN. Interacts with STX16. Interacts (probably via GRIP domain) with RAB9A (preferentially in its GTP-bound form).

The protein localises to the cytoplasm. Its subcellular location is the golgi apparatus. It localises to the trans-Golgi network membrane. Its function is as follows. Golgin which probably tethers transport vesicles to the trans-Golgi network (TGN) and regulates vesicular transport between the endosomes and the Golgi. As a RAB9A effector it is involved in recycling of the mannose 6-phosphate receptor from the late endosomes to the TGN. May also play a role in transport between the recycling endosomes and the Golgi. Required for maintenance of the Golgi structure, it is involved in the biogenesis of noncentrosomal, Golgi-associated microtubules through recruitment of CLASP1 and CLASP2. This Rattus norvegicus (Rat) protein is GRIP and coiled-coil domain-containing protein 2 (Gcc2).